We begin with the raw amino-acid sequence, 240 residues long: LOB domain-containing protein 39 (240 aa).

The LOB domain occupies 1-107; the sequence is MSCNGCRVLR…VETVLRGGTL (107 aa). A disordered region spans residues 200–233; it reads GDRPGSPSEESVTTSCWENGMRGDNKQKRNKGEK. Over residues 207 to 216 the composition is skewed to polar residues; sequence SEESVTTSCW.

The protein belongs to the LOB domain-containing protein family. Expressed in young shoots, roots, stems, leaves and flowers.

The protein is LOB domain-containing protein 39 (LBD39) of Arabidopsis thaliana (Mouse-ear cress).